Consider the following 239-residue polypeptide: Tetratricopeptide repeat protein 9B (239 aa).

The disordered stretch occupies residues 1–54; sequence MQRGALSPVLMLSAAPEPPPRPPPALSPPGPGSAPRHGSARSGPAPEPSGGLAA. Phosphoserine is present on residues S7 and S27. Pro residues predominate over residues 16–32; sequence PEPPPRPPPALSPPGPG. A TPR 1 repeat occupies 63–97; it reads AVAFKAEGQRCYREKKFREAIGKYHRALLQLKAAQ. The segment at 98 to 121 is disordered; sequence GARPGGLPTPSPGPTTSPGPARLS. The span at 104–114 shows a compositional bias: pro residues; sequence LPTPSPGPTTS. The TPR 2 repeat unit spans residues 169-202; it reads FKATYRAGIAFYHLGDYARALRYLQEARSREPTD.

The protein belongs to the TTC9 family.

The sequence is that of Tetratricopeptide repeat protein 9B (Ttc9b) from Mus musculus (Mouse).